Here is a 429-residue protein sequence, read N- to C-terminus: Histidine--tRNA ligase (429 aa).

This sequence belongs to the class-II aminoacyl-tRNA synthetase family. In terms of assembly, homodimer.

The protein localises to the cytoplasm. It carries out the reaction tRNA(His) + L-histidine + ATP = L-histidyl-tRNA(His) + AMP + diphosphate + H(+). This Pelodictyon phaeoclathratiforme (strain DSM 5477 / BU-1) protein is Histidine--tRNA ligase.